The following is a 1053-amino-acid chain: DIS3-like exonuclease 1 (1053 aa).

Residues 236 to 310 enclose the CSD1 domain; that stretch reads AGIKSGRYIQ…KSEWKGRTAA (75 aa). The tract at residues 306–332 is disordered; it reads GRTAALGENDSDDKASGESPSEPMPTG. Residues 365–431 form the CSD2 domain; it reads ILVTPWDYRI…GEIATILVEN (67 aa). The RNB domain occupies 465 to 816; it reads RKDLRTTHLV…VHRLLMAAIS (352 aa). Ser-989 carries the phosphoserine modification.

Belongs to the RNR ribonuclease family. As to quaternary structure, component of the RNA exosome complex. The catalytically inactive RNA exosome core (Exo-9) complex is believed to associate with catalytic subunits EXOSC10, and DIS3 or DIS3L in cytoplasmic- and nuclear-specific RNA exosome complex forms. It depends on Mg(2+) as a cofactor.

Its subcellular location is the cytoplasm. The enzyme catalyses Exonucleolytic cleavage in the 3'- to 5'-direction to yield nucleoside 5'-phosphates.. Its function is as follows. Catalytic component of the RNA exosome complex which has 3'-&gt;5' exoribonuclease activity and participates in a multitude of cellular RNA processing and degradation events. In the cytoplasm, the RNA exosome complex is involved in general mRNA turnover and specifically degrades inherently unstable mRNAs containing AU-rich elements (AREs) within their 3' untranslated regions, and in RNA surveillance pathways, preventing translation of aberrant mRNAs. It seems to be involved in degradation of histone mRNA. The sequence is that of DIS3-like exonuclease 1 (Dis3l) from Mus musculus (Mouse).